We begin with the raw amino-acid sequence, 284 residues long: Phosphatidylserine decarboxylase proenzyme (284 aa).

Residues aspartate 88, histidine 145, and serine 248 each act as charge relay system; for autoendoproteolytic cleavage activity in the active site. Residue serine 248 is the Schiff-base intermediate with substrate; via pyruvic acid; for decarboxylase activity of the active site. Serine 248 bears the Pyruvic acid (Ser); by autocatalysis mark.

Belongs to the phosphatidylserine decarboxylase family. PSD-B subfamily. Prokaryotic type I sub-subfamily. As to quaternary structure, heterodimer of a large membrane-associated beta subunit and a small pyruvoyl-containing alpha subunit. Pyruvate serves as cofactor. Post-translationally, is synthesized initially as an inactive proenzyme. Formation of the active enzyme involves a self-maturation process in which the active site pyruvoyl group is generated from an internal serine residue via an autocatalytic post-translational modification. Two non-identical subunits are generated from the proenzyme in this reaction, and the pyruvate is formed at the N-terminus of the alpha chain, which is derived from the carboxyl end of the proenzyme. The autoendoproteolytic cleavage occurs by a canonical serine protease mechanism, in which the side chain hydroxyl group of the serine supplies its oxygen atom to form the C-terminus of the beta chain, while the remainder of the serine residue undergoes an oxidative deamination to produce ammonia and the pyruvoyl prosthetic group on the alpha chain. During this reaction, the Ser that is part of the protease active site of the proenzyme becomes the pyruvoyl prosthetic group, which constitutes an essential element of the active site of the mature decarboxylase.

It localises to the cell membrane. The enzyme catalyses a 1,2-diacyl-sn-glycero-3-phospho-L-serine + H(+) = a 1,2-diacyl-sn-glycero-3-phosphoethanolamine + CO2. The protein operates within phospholipid metabolism; phosphatidylethanolamine biosynthesis; phosphatidylethanolamine from CDP-diacylglycerol: step 2/2. Its function is as follows. Catalyzes the formation of phosphatidylethanolamine (PtdEtn) from phosphatidylserine (PtdSer). This is Phosphatidylserine decarboxylase proenzyme from Delftia acidovorans (strain DSM 14801 / SPH-1).